The chain runs to 583 residues: Aspartyl protease APCB1 (583 aa).

The helical transmembrane segment at 83 to 103 (LVLGLLGISLLAVAFYASVFP) threads the bilayer. Residues 203-564 (YYTRILVGKP…DNVKRRIGWM (362 aa)) enclose the Peptidase A1 domain. Catalysis depends on residues D223 and D431.

The protein belongs to the peptidase A1 family. As to quaternary structure, interacts with BAG6 and BAGP1.

Its subcellular location is the membrane. In terms of biological role, involved in proteolytic processing of BAG6 and plant basal immunity. This is Aspartyl protease APCB1 from Arabidopsis thaliana (Mouse-ear cress).